We begin with the raw amino-acid sequence, 581 residues long: Fibrous sheath-interacting protein 1 (581 aa).

Positions 1–77 are disordered; sequence MDIIKGNLDG…SNDDKRESCS (77 aa). The span at 14-30 shows a compositional bias: polar residues; sequence PASNSRIRPGSRSSNAS. Residues 52–77 show a composition bias toward basic and acidic residues; it reads GKEDHSESSNTENRRTSNDDKRESCS. S87 bears the Phosphoserine mark. Residues 103-153 adopt a coiled-coil conformation; it reads SDEHKLEELDSQLQDAIQKMKKLDKILAKTQRREKEIKKQGLEMRIKLWEE. Disordered regions lie at residues 338 to 370 and 553 to 581; these read SSFS…KVLR and DQHL…CKEP.

It belongs to the FSIP1 family.

This Macaca fascicularis (Crab-eating macaque) protein is Fibrous sheath-interacting protein 1 (FSIP1).